Reading from the N-terminus, the 426-residue chain is Glutamate-1-semialdehyde 2,1-aminomutase (426 aa).

At Lys-265 the chain carries N6-(pyridoxal phosphate)lysine.

Belongs to the class-III pyridoxal-phosphate-dependent aminotransferase family. HemL subfamily. Homodimer. The cofactor is pyridoxal 5'-phosphate.

It is found in the cytoplasm. The enzyme catalyses (S)-4-amino-5-oxopentanoate = 5-aminolevulinate. Its pathway is porphyrin-containing compound metabolism; protoporphyrin-IX biosynthesis; 5-aminolevulinate from L-glutamyl-tRNA(Glu): step 2/2. The polypeptide is Glutamate-1-semialdehyde 2,1-aminomutase (Sodalis glossinidius (strain morsitans)).